A 185-amino-acid polypeptide reads, in one-letter code: Peptidyl-tRNA hydrolase (185 aa).

Residue Tyr14 coordinates tRNA. Residue His19 is the Proton acceptor of the active site. 3 residues coordinate tRNA: Tyr64, Asn66, and Asn112.

It belongs to the PTH family. Monomer.

The protein resides in the cytoplasm. The enzyme catalyses an N-acyl-L-alpha-aminoacyl-tRNA + H2O = an N-acyl-L-amino acid + a tRNA + H(+). Its function is as follows. Hydrolyzes ribosome-free peptidyl-tRNAs (with 1 or more amino acids incorporated), which drop off the ribosome during protein synthesis, or as a result of ribosome stalling. Catalyzes the release of premature peptidyl moieties from peptidyl-tRNA molecules trapped in stalled 50S ribosomal subunits, and thus maintains levels of free tRNAs and 50S ribosomes. The chain is Peptidyl-tRNA hydrolase from Exiguobacterium sibiricum (strain DSM 17290 / CCUG 55495 / CIP 109462 / JCM 13490 / 255-15).